Consider the following 338-residue polypeptide: Aspartate-semialdehyde dehydrogenase (338 aa).

Residues 13–16 (TGNV) and 41–42 (NS) contribute to the NADP(+) site. Position 101 (Arg101) interacts with phosphate. Cys132 serves as the catalytic Acyl-thioester intermediate. Gln159 is a substrate binding site. Residues 162–163 (SG) and Pro187 each bind NADP(+). Phosphate is bound at residue Lys216. Substrate is bound at residue Arg237. His244 (proton acceptor) is an active-site residue. Residue Asn317 participates in NADP(+) binding.

Belongs to the aspartate-semialdehyde dehydrogenase family. Homodimer.

It catalyses the reaction L-aspartate 4-semialdehyde + phosphate + NADP(+) = 4-phospho-L-aspartate + NADPH + H(+). It functions in the pathway amino-acid biosynthesis; L-lysine biosynthesis via DAP pathway; (S)-tetrahydrodipicolinate from L-aspartate: step 2/4. Its pathway is amino-acid biosynthesis; L-methionine biosynthesis via de novo pathway; L-homoserine from L-aspartate: step 2/3. It participates in amino-acid biosynthesis; L-threonine biosynthesis; L-threonine from L-aspartate: step 2/5. In terms of biological role, catalyzes the NADPH-dependent formation of L-aspartate-semialdehyde (L-ASA) by the reductive dephosphorylation of L-aspartyl-4-phosphate. The chain is Aspartate-semialdehyde dehydrogenase from Rickettsia typhi (strain ATCC VR-144 / Wilmington).